Reading from the N-terminus, the 65-residue chain is Conopeptide Vt3.2 (65 aa).

Positions 1–12 (LLFPLATLQLNA) are cleaved as a signal peptide. Positions 13 to 48 (DQPVERNAENIQDLNPDKRFIFMPVPRRRGPYGSVH) are excised as a propeptide. S64 is modified (serine amide).

This sequence belongs to the conotoxin M superfamily. As to quaternary structure, homodimer; disulfide-linked. Expressed by the venom duct.

Its subcellular location is the secreted. The protein is Conopeptide Vt3.2 of Conus planorbis (Planorbis cone).